The sequence spans 842 residues: Outer membrane usher protein AggC (842 aa).

The signal sequence occupies residues 1-21 (MKTSSFIIVILLCFRIENVIA). Cysteine 819 and cysteine 841 are disulfide-bonded.

This sequence belongs to the fimbrial export usher family.

The protein localises to the cell outer membrane. Its function is as follows. Involved in the export and assembly of the AAF/I fimbriae subunits across the outer membrane. The polypeptide is Outer membrane usher protein AggC (aggC) (Escherichia coli).